Reading from the N-terminus, the 385-residue chain is Succinyl-diaminopimelate desuccinylase (385 aa).

His73 contacts Zn(2+). Asp75 is an active-site residue. Asp106 serves as a coordination point for Zn(2+). Catalysis depends on Glu141, which acts as the Proton acceptor. Residues Glu142, Glu170, and His359 each coordinate Zn(2+).

It belongs to the peptidase M20A family. DapE subfamily. In terms of assembly, homodimer. Zn(2+) serves as cofactor. The cofactor is Co(2+).

The catalysed reaction is N-succinyl-(2S,6S)-2,6-diaminopimelate + H2O = (2S,6S)-2,6-diaminopimelate + succinate. The protein operates within amino-acid biosynthesis; L-lysine biosynthesis via DAP pathway; LL-2,6-diaminopimelate from (S)-tetrahydrodipicolinate (succinylase route): step 3/3. Catalyzes the hydrolysis of N-succinyl-L,L-diaminopimelic acid (SDAP), forming succinate and LL-2,6-diaminopimelate (DAP), an intermediate involved in the bacterial biosynthesis of lysine and meso-diaminopimelic acid, an essential component of bacterial cell walls. The protein is Succinyl-diaminopimelate desuccinylase of Methylorubrum extorquens (strain PA1) (Methylobacterium extorquens).